The chain runs to 193 residues: Large ribosomal subunit protein eL19A (193 aa).

The tract at residues 156–179 (QEQQDARRARAKAARQRRAKAVEE) is disordered. The span at 164-174 (ARAKAARQRRA) shows a compositional bias: basic residues.

It belongs to the eukaryotic ribosomal protein eL19 family. In terms of assembly, component of the large ribosomal subunit (LSU). Mature yeast ribosomes consist of a small (40S) and a large (60S) subunit. The 40S small subunit contains 1 molecule of ribosomal RNA (18S rRNA) and at least 33 different proteins. The large 60S subunit contains 3 rRNA molecules (25S, 5.8S and 5S rRNA) and at least 46 different proteins. eL19 lies in close proximity to the binding site for eukaryotic initiation factor eIF4G.

Its subcellular location is the cytoplasm. In terms of biological role, component of the ribosome, a large ribonucleoprotein complex responsible for the synthesis of proteins in the cell. The small ribosomal subunit (SSU) binds messenger RNAs (mRNAs) and translates the encoded message by selecting cognate aminoacyl-transfer RNA (tRNA) molecules. The large subunit (LSU) contains the ribosomal catalytic site termed the peptidyl transferase center (PTC), which catalyzes the formation of peptide bonds, thereby polymerizing the amino acids delivered by tRNAs into a polypeptide chain. The nascent polypeptides leave the ribosome through a tunnel in the LSU and interact with protein factors that function in enzymatic processing, targeting, and the membrane insertion of nascent chains at the exit of the ribosomal tunnel. eL19 may play a role in the last stages of translation initiation, in particular subunit joining and shedding/releasing factors. This is Large ribosomal subunit protein eL19A (rpl1901) from Schizosaccharomyces pombe (strain 972 / ATCC 24843) (Fission yeast).